Here is a 543-residue protein sequence, read N- to C-terminus: Zinc finger CCCH-type with G patch domain-containing protein (543 aa).

2 disordered regions span residues 55–79 (AATS…DNPI) and 95–132 (TEDS…DKLD). The segment covering 65–76 (DTAGRAPPATAD) has biased composition (low complexity). Residues 118–131 (DDDADNDDDADDKL) are compositionally biased toward acidic residues. A C3H1-type zinc finger spans residues 186-209 (PCAYFLEGECRFTDEKCRYSHGEV). Residues 272–304 (PFEDLLPLDEDEDGQEAAEDSESDTDGADEEEA) are disordered. The span at 277 to 304 (LPLDEDEDGQEAAEDSESDTDGADEEEA) shows a compositional bias: acidic residues. One can recognise a G-patch domain in the interval 335 to 381 (TRGIGSKIMQKMGYIVGTGLGREGEGIVVPVSAQVLPQGRSLDYCME). The tract at residues 438–460 (GAAGGESSRPNRNRPGALSRQEL) is disordered.

Its subcellular location is the nucleus. Transcription repressor. The sequence is that of Zinc finger CCCH-type with G patch domain-containing protein from Anopheles gambiae (African malaria mosquito).